The following is a 74-amino-acid chain: Putative membrane protein insertion efficiency factor (74 aa).

It belongs to the UPF0161 family.

Its subcellular location is the cell inner membrane. Functionally, could be involved in insertion of integral membrane proteins into the membrane. The chain is Putative membrane protein insertion efficiency factor from Endomicrobium trichonymphae.